Reading from the N-terminus, the 288-residue chain is Phytanoyl-CoA dioxygenase domain-containing protein 1 homolog (288 aa).

2-oxoglutarate-binding positions include lysine 95, methionine 134, 149–151 (HVD), and tryptophan 167. Fe cation contacts are provided by histidine 149 and aspartate 151. Histidine 242 is a binding site for Fe cation. Residues serine 244 and arginine 253 each coordinate 2-oxoglutarate.

It belongs to the PhyH family. PHYHD1 subfamily. Fe cation serves as cofactor.

In terms of biological role, has alpha-ketoglutarate-dependent dioxygenase activity. Does not show detectable activity towards fatty acid CoA thioesters. Is not expected to be active with phytanoyl CoA. This chain is Phytanoyl-CoA dioxygenase domain-containing protein 1 homolog, found in Caenorhabditis elegans.